Reading from the N-terminus, the 319-residue chain is MLFWLLALLFLCAFLWNYKGQLKIADIADKYVFITGCDTGFGNLAARTFDKKGFRVIAACLTESGSAALKAKTSERLHTVLLDVTDPENVKKTAQWVKSHVGEKGLWGLINNAGVLGVLAPTDWLTVDDYREPIEVNLFGLINVTLNMLPLVKKARGRVINVSSIGGRLAFGGGGYTPSKYAVEGFNDSLRRDMKAFGVHVSCIEPGLFKTELADPIKTTEKKLAIWKHLSPDIKQQYGEGYIEKSLHRLKSNTSSVNLDLSLVVGCMDHALTSLFPKTRYIAGKDAKTFWIPLSHMPAVLQDFLLLKQKVELANPKAV.

Residues 1 to 20 form the signal peptide; the sequence is MLFWLLALLFLCAFLWNYKG. Residues 34–58 and D83 contribute to the NAD(+) site; that span reads ITGCDTGFGNLAARTFDKKGFRVIA. Substrate is bound at residue S164. Catalysis depends on Y176, which acts as the Proton acceptor. K180 contacts NAD(+).

Belongs to the short-chain dehydrogenases/reductases (SDR) family. As to quaternary structure, homotetramer.

It localises to the microsome membrane. Its subcellular location is the endoplasmic reticulum membrane. It carries out the reaction 3beta-hydroxy-5alpha-pregnane-20-one + NAD(+) = 5alpha-pregnane-3,20-dione + NADH + H(+). It catalyses the reaction 17beta-hydroxy-5alpha-androstan-3-one + NAD(+) = 5alpha-androstan-3,17-dione + NADH + H(+). The enzyme catalyses androsterone + NAD(+) = 5alpha-androstan-3,17-dione + NADH + H(+). The catalysed reaction is 5alpha-androstane-3alpha,17beta-diol + NAD(+) = 17beta-hydroxy-5alpha-androstan-3-one + NADH + H(+). It carries out the reaction all-trans-retinol + NAD(+) = all-trans-retinal + NADH + H(+). It catalyses the reaction 3alpha-hydroxy-5alpha-pregnan-20-one + NAD(+) = 5alpha-pregnane-3,20-dione + NADH + H(+). Functionally, 3-alpha-hydroxysteroid dehydrogenase that converts 3-alpha-tetrahydroprogesterone (allopregnanolone) to dihydroxyprogesterone and 3-alpha-androstanediol to dihydroxyprogesterone. Also plays a role in the biosynthesis of retinoic acid. Can utilize both NADH and NADPH. The polypeptide is Dehydrogenase/reductase SDR family member 9 (Dhrs9) (Mus musculus (Mouse)).